A 132-amino-acid polypeptide reads, in one-letter code: Protein NrdI (132 aa).

It belongs to the NrdI family.

Its function is as follows. Probably involved in ribonucleotide reductase function. In Agrobacterium fabrum (strain C58 / ATCC 33970) (Agrobacterium tumefaciens (strain C58)), this protein is Protein NrdI.